We begin with the raw amino-acid sequence, 533 residues long: Tyrosine protein-kinase src-1 (533 aa).

A lipid anchor (N-myristoyl glycine) is attached at Gly-2. The SH3 domain occupies Gln-71 to Thr-132. In terms of domain architecture, SH2 spans Trp-138–Ala-237. Positions Leu-262 to Phe-521 constitute a Protein kinase domain. Residues Leu-268–Val-276 and Lys-290 contribute to the ATP site. Catalysis depends on Asp-381, which acts as the Proton acceptor. Position 416 is a phosphotyrosine; by autocatalysis (Tyr-416). Residue Tyr-528 is modified to Phosphotyrosine.

This sequence belongs to the protein kinase superfamily. Tyr protein kinase family. SRC subfamily. In terms of assembly, interacts (via SH2 domain and SH3 domain) with unc-5 (via cytoplasmic domain); the interaction requires kinase activity. Interacts (when activated and phosphorylated at 'Tyr-416') with ina-1 (via cytoplasmic domain) and with ced-2 (via SH2 domain). Requires Mg(2+) as cofactor. It depends on Mn(2+) as a cofactor. May be phosphorylated on Tyr-528 by csk-1. Expressed in some neurons (ASE, ADF, AVA, AUA, RMDV and BAG) in the head region, anchor cell, vulva, cells around anus, body wall muscle, pharyngeal muscles in procorpus and metacorpus. Expressed in gonadal distal tip cells.

The protein resides in the cell membrane. The protein localises to the cell projection. It is found in the phagocytic cup. The enzyme catalyses L-tyrosyl-[protein] + ATP = O-phospho-L-tyrosyl-[protein] + ADP + H(+). May be activated by autophosphorylation. May be inhibited by csk-1-mediated phosphorylation. Its function is as follows. Non-receptor tyrosine-protein kinase which plays a role in endoderm development by controlling spindle orientation in EMS blastomere, probably downstream of receptor mes-1. Also involved in embryonic body morphogenesis, especially in the formation of the pharynx and the intestine. May be dispensable for pharyngeal muscle organization in the adult. Probably phosphorylates netrin receptor unc-5, to regulate distal tip cell (DTC) migration during gonad development and in axon repulsion. Plays a role in the migration of the QR neuroblast, a precursor of the AVM neuron, and in the migration of the axon cone of AVM, ALM, CAN and PVM neurons. May act downstream of migratory protein mig-13 to control AVM neuron migration. Probably downstream of integrin ina-1/pat-3, plays a role in the clearance of apoptotic cells during mid-embryogenesis. Phosphorylates ced-1 at 'Tyr-1019' which promotes ced-1 proteasomal degradation, maintaining appropriate ced-1 levels for apoptotic cell clearance. The chain is Tyrosine protein-kinase src-1 from Caenorhabditis elegans.